We begin with the raw amino-acid sequence, 376 residues long: Neuropeptide receptor 3 (376 aa).

Residues 1-29 (MEGGRNCVMTVQQWQPEYNDMNQIRAIFS) lie on the Extracellular side of the membrane. Residues 30 to 50 (LLYLLVWVGAIVGNTLVLYVL) form a helical membrane-spanning segment. Over 51 to 66 (TFNQVSLSVRTVFVGC) the chain is Cytoplasmic. A helical membrane pass occupies residues 67–87 (LAGSDLLMCLFSLPITAISIF). Over 88 to 89 (SR) the chain is Extracellular. A helical membrane pass occupies residues 90 to 110 (VWVFPAIFCKLIGVFQGGTIF). Cysteine 98 and cysteine 175 are joined by a disulfide. The Cytoplasmic portion of the chain corresponds to 111–139 (VSSFTLTVIALDRCVLILRPNQEIVNFPR). Residues 140 to 160 (AVFIVFCIWLLGYSLALPVGI) form a helical membrane-spanning segment. Over 161-197 (YSDIAVYDEICGTFCEENWPDFNPDTGRSGIRRAYGL) the chain is Extracellular. The chain crosses the membrane as a helical span at residues 198–218 (SVLVLQFGIPALISSICYWMI). At 219–251 (SRVMSDQLARRRGHNIRPESETKLVNRKTRANR) the chain is on the cytoplasmic side. Residues 252-272 (MMIVMVVGFVLAWMPFNAVNL) form a helical membrane-spanning segment. Residues 273 to 284 (YRDLFGISKWYS) lie on the Extracellular side of the membrane. Residues 285–305 (TVFALCHVCAMCSAVLNPIIY) traverse the membrane as a helical segment. The Cytoplasmic segment spans residues 306–376 (SWFNPQFRQS…NDYRAGDQLL (71 aa)).

It belongs to the G-protein coupled receptor 1 family.

The protein resides in the cell membrane. G-protein coupled receptor for flp-15 neuropeptides. Receptor activation assays suggest binding to predicted flp-15 peptides, GGPQGPLRF-NH2 and RGPSGPLRF-NH2. Likely involved in Gi/Go-coupled signaling pathways. In Caenorhabditis elegans, this protein is Neuropeptide receptor 3.